Reading from the N-terminus, the 117-residue chain is MQNIPPQVQAMLGQLESYQQQLQLVVQQKQKVQLELTEAKKALDEIESLPDDAVVYKTVGTLIVKTTKDKAVAELKEKIETLEVRLNALERQEKKLNEKLKELTAQIQSALRPPTAG.

This sequence belongs to the prefoldin subunit beta family. In terms of assembly, heterohexamer of two alpha and four beta subunits.

The protein resides in the cytoplasm. Molecular chaperone capable of stabilizing a range of proteins. Seems to fulfill an ATP-independent, HSP70-like function in archaeal de novo protein folding. The polypeptide is Prefoldin subunit beta (Thermococcus kodakarensis (strain ATCC BAA-918 / JCM 12380 / KOD1) (Pyrococcus kodakaraensis (strain KOD1))).